A 92-amino-acid chain; its full sequence is Small ribosomal subunit protein uS19c (92 aa).

Belongs to the universal ribosomal protein uS19 family.

It localises to the plastid. The protein localises to the chloroplast. In terms of biological role, protein S19 forms a complex with S13 that binds strongly to the 16S ribosomal RNA. This is Small ribosomal subunit protein uS19c from Oedogonium cardiacum (Filamentous green alga).